We begin with the raw amino-acid sequence, 215 residues long: MKGVYFVSGIDTDIGKTVATGMLAKQLLQQGKSVITQKPVQTGCQDIAEDIAVHRKIMGIPMQEADEQRLTMPEIFSHPASPHLAARLDGRGLDLDKIRTATQELAAQYEVVLVEGAGGLMVPLTEKLLTIDHIQQQAYPVILVTSGRLGSINHTLLSFVVLKQYGIRLHSLVFNHIHDSRDAHVAQDSLNYLQCRLKADFPEAEWMELAKTGAV.

Position 13–18 (13–18) interacts with ATP; that stretch reads DIGKTV. Thr-17 contacts Mg(2+). Lys-38 is an active-site residue. Thr-42 lines the substrate pocket. ATP is bound by residues Asp-50, 115-118, and 175-176; these read EGAG and NH. Residues Asp-50 and Glu-115 each coordinate Mg(2+).

This sequence belongs to the dethiobiotin synthetase family. In terms of assembly, homodimer. Mg(2+) is required as a cofactor.

Its subcellular location is the cytoplasm. It carries out the reaction (7R,8S)-7,8-diammoniononanoate + CO2 + ATP = (4R,5S)-dethiobiotin + ADP + phosphate + 3 H(+). It participates in cofactor biosynthesis; biotin biosynthesis; biotin from 7,8-diaminononanoate: step 1/2. Catalyzes a mechanistically unusual reaction, the ATP-dependent insertion of CO2 between the N7 and N8 nitrogen atoms of 7,8-diaminopelargonic acid (DAPA, also called 7,8-diammoniononanoate) to form a ureido ring. The chain is ATP-dependent dethiobiotin synthetase BioD from Neisseria gonorrhoeae (strain NCCP11945).